We begin with the raw amino-acid sequence, 165 residues long: Hemolysin, heat labile (165 aa).

An intrachain disulfide couples Cys151 to Cys161.

It belongs to the TDH hemolysin family. Homodimer.

Bacterial hemolysins are exotoxins that attack blood cell membranes and cause cell rupture by mechanisms not clearly defined. The sequence is that of Hemolysin, heat labile from Grimontia hollisae (Vibrio hollisae).